A 302-amino-acid polypeptide reads, in one-letter code: MTGPVPDARVIDGKAFAAGLRARIADAVPAFRAATGRAPGLAVVLVGDDPASAVYVGSKGKATVAAGMASFEHRLAATATQDEVEALLRQLNADEAVDGILLQLPLPGHLDEQAAVATIDPDKDVDGLTPVSAGRLALGIPGMVPCTPYGCLLLLQDRLGDLSGKDAIVIGRSILVGKPMGQLLLGANCTVTMAHSRTKDLPALVRRADIVVAAVGRAEMVKGDWIKPGAIVIDVGINRLPPADGAAKGRLVGDVDYAAALGVADAITPVPGGVGPMTIACLLRNTLVAAHRRAGLADPEGF.

Residues 171-173, serine 196, and isoleucine 237 contribute to the NADP(+) site; that span reads GRS.

It belongs to the tetrahydrofolate dehydrogenase/cyclohydrolase family. Homodimer.

The catalysed reaction is (6R)-5,10-methylene-5,6,7,8-tetrahydrofolate + NADP(+) = (6R)-5,10-methenyltetrahydrofolate + NADPH. The enzyme catalyses (6R)-5,10-methenyltetrahydrofolate + H2O = (6R)-10-formyltetrahydrofolate + H(+). Its pathway is one-carbon metabolism; tetrahydrofolate interconversion. Its function is as follows. Catalyzes the oxidation of 5,10-methylenetetrahydrofolate to 5,10-methenyltetrahydrofolate and then the hydrolysis of 5,10-methenyltetrahydrofolate to 10-formyltetrahydrofolate. The polypeptide is Bifunctional protein FolD (Sphingopyxis alaskensis (strain DSM 13593 / LMG 18877 / RB2256) (Sphingomonas alaskensis)).